We begin with the raw amino-acid sequence, 715 residues long: Protein sneaky (715 aa).

Topologically, residues 1 to 32 (MLSLLTRPFLPIFCFLYGPQSEGSTRIQCLRR) are cytoplasmic. The helical transmembrane segment at 33-53 (FVTFLLGLVLGFLLWKLAALN) threads the bilayer. Topologically, residues 54-66 (FTLGRLFVNGATD) are extracellular. A helical transmembrane segment spans residues 67–87 (LYVFIIFVLVTGTIFMLSLPV). The Cytoplasmic segment spans residues 88 to 109 (RAVILLIFVALVGKSGRTYLRA). The chain crosses the membrane as a helical span at residues 110–130 (VAFAFIISGPIANLVENAGEV). The Extracellular portion of the chain corresponds to 131-373 (ARVFVCTTVL…FERQKRIFNK (243 aa)). A helical transmembrane segment spans residues 374 to 394 (VMGILQKILCLFMLRMVYVSI). Residues 395–457 (NYYVKYLNDV…FSRTHHESTT (63 aa)) lie on the Cytoplasmic side of the membrane. The helical transmembrane segment at 458 to 478 (VCFNLLQFLLELVTAGLFILI) threads the bilayer. Residues 479–553 (DHLVVELLQI…NAHVLPKKMY (75 aa)) are Extracellular-facing. The chain crosses the membrane as a helical span at residues 554–574 (YQLILLYLIIIVLIYQSTTFL). The Cytoplasmic segment spans residues 575 to 715 (RMRRVICSFF…VEVYTYRKEK (141 aa)). The segment at 655–691 (CMICRGLEDSTFTVCGNCGLPYCDDCAEDLNSVCFQC) adopts an RING-type; degenerate zinc-finger fold.

As to expression, specifically expressed in testis.

Its subcellular location is the cytoplasmic vesicle. It is found in the secretory vesicle. It localises to the acrosome membrane. The protein localises to the cytoplasm. The protein resides in the cytoplasmic vesicle membrane. Functionally, component of the sperm acrosome membrane. Required for breakdown of the sperm plasma membrane after sperm entry into the egg, which is an essential prerequisite for successful fertilization. In Drosophila melanogaster (Fruit fly), this protein is Protein sneaky.